The chain runs to 821 residues: G-type lectin S-receptor-like serine/threonine-protein kinase SD2-5 (821 aa).

Positions 1–21 are cleaved as a signal peptide; sequence MRGVFIVIVTCLVFLPDPLRA. The Extracellular segment spans residues 22–429; that stretch reads GVASIGSITP…NGEDDGKHFP (408 aa). Positions 33-148 constitute a Bulb-type lectin domain; that stretch reads FGGSQMNYIN…DGTSIWESFD (116 aa). 4 N-linked (GlcNAc...) asparagine glycosylation sites follow: N51, N121, N174, and N248. The 35-residue stretch at 280-314 folds into the EGF-like; atypical domain; sequence PSDLCGTPEPCGPYYVCSGSKVCGCVSGLSRARSD. Cystine bridges form between C284–C296 and C290–C302. In terms of domain architecture, PAN spans 323 to 411; that stretch reads CKKTKDNATL…SGFVSYIKIA (89 aa). N-linked (GlcNAc...) asparagine glycosylation is found at N329, N370, and N380. 2 disulfides stabilise this stretch: C363/C385 and C367/C373. Residues 430 to 450 traverse the membrane as a helical segment; it reads YVVIIVVVTVFIIAVLIFVAF. The Cytoplasmic portion of the chain corresponds to 451–821; sequence RIHKRKKMIL…LSAVRLSGPR (371 aa). Residues 493 to 768 enclose the Protein kinase domain; it reads NNFSVKLGQG…KVVQMLEGVF (276 aa). ATP contacts are provided by residues 499–507 and K521; that span reads LGQGGFGSV. Positions 581–599 are caM-binding; sequence KDGDVLLDWDTRFNIALGT. The active-site Proton acceptor is the D618. A Phosphoserine modification is found at S635. Phosphothreonine is present on T652.

The protein belongs to the protein kinase superfamily. Ser/Thr protein kinase family. In terms of assembly, interacts with PUB9, PUB13, PUB14 and PUB29.

Its subcellular location is the membrane. The catalysed reaction is L-seryl-[protein] + ATP = O-phospho-L-seryl-[protein] + ADP + H(+). It catalyses the reaction L-threonyl-[protein] + ATP = O-phospho-L-threonyl-[protein] + ADP + H(+). In Arabidopsis thaliana (Mouse-ear cress), this protein is G-type lectin S-receptor-like serine/threonine-protein kinase SD2-5 (SD25).